The following is a 160-amino-acid chain: Cyclic pyranopterin monophosphate synthase (160 aa).

Residues 76-78 (MCH) and 113-114 (ME) each bind substrate. The active site involves Asp128.

This sequence belongs to the MoaC family. Homohexamer; trimer of dimers.

The catalysed reaction is (8S)-3',8-cyclo-7,8-dihydroguanosine 5'-triphosphate = cyclic pyranopterin phosphate + diphosphate. The protein operates within cofactor biosynthesis; molybdopterin biosynthesis. Functionally, catalyzes the conversion of (8S)-3',8-cyclo-7,8-dihydroguanosine 5'-triphosphate to cyclic pyranopterin monophosphate (cPMP). This chain is Cyclic pyranopterin monophosphate synthase, found in Brevibacillus brevis (strain 47 / JCM 6285 / NBRC 100599).